Consider the following 789-residue polypeptide: Endonuclease MutS2 (789 aa).

Residue 334–341 (GPNTGGKT) participates in ATP binding. The tract at residues 690-714 (PEKDIQQSGTGKIMKSKTGDTKSEV) is disordered. The region spanning 714 to 789 (VDVRGKNLEE…GMGVTIVELK (76 aa)) is the Smr domain.

The protein belongs to the DNA mismatch repair MutS family. MutS2 subfamily. In terms of assembly, homodimer. Binds to stalled ribosomes, contacting rRNA.

Endonuclease that is involved in the suppression of homologous recombination and thus may have a key role in the control of bacterial genetic diversity. Functionally, acts as a ribosome collision sensor, splitting the ribosome into its 2 subunits. Detects stalled/collided 70S ribosomes which it binds and splits by an ATP-hydrolysis driven conformational change. Acts upstream of the ribosome quality control system (RQC), a ribosome-associated complex that mediates the extraction of incompletely synthesized nascent chains from stalled ribosomes and their subsequent degradation. Probably generates substrates for RQC. This Alkaliphilus metalliredigens (strain QYMF) protein is Endonuclease MutS2.